Here is a 371-residue protein sequence, read N- to C-terminus: Large ribosomal subunit protein bL27m (371 aa).

Residues 1–27 (MWNPILLDTSSFSFQKHVSGVFLQVRN) constitute a mitochondrion transit peptide.

Belongs to the bacterial ribosomal protein bL27 family. As to quaternary structure, component of the mitochondrial large ribosomal subunit (mt-LSU). Mature yeast 74S mitochondrial ribosomes consist of a small (37S) and a large (54S) subunit. The 37S small subunit contains a 15S ribosomal RNA (15S mt-rRNA) and 34 different proteins. The 54S large subunit contains a 21S rRNA (21S mt-rRNA) and 46 different proteins.

It localises to the mitochondrion. Component of the mitochondrial ribosome (mitoribosome), a dedicated translation machinery responsible for the synthesis of mitochondrial genome-encoded proteins, including at least some of the essential transmembrane subunits of the mitochondrial respiratory chain. The mitoribosomes are attached to the mitochondrial inner membrane and translation products are cotranslationally integrated into the membrane. The protein is Large ribosomal subunit protein bL27m (MRP7) of Saccharomyces cerevisiae (strain ATCC 204508 / S288c) (Baker's yeast).